The sequence spans 810 residues: Protein kinase C-binding protein NELL1 (810 aa).

The N-terminal stretch at Met1–Gly21 is a signal peptide. 6 N-linked (GlcNAc...) asparagine glycosylation sites follow: Asn40, Asn53, Asn83, Asn224, Asn294, and Asn372. Residues Ala57–Cys227 form the Laminin G-like domain. The region spanning Lys271 to Arg332 is the VWFC 1 domain. 3 disulfides stabilise this stretch: Cys395-Cys407, Cys401-Cys416, and Cys418-Cys432. Residues Asp434, Ile435, and Glu437 each coordinate Ca(2+). The 42-residue stretch at Asp434 to Thr475 folds into the EGF-like 1; calcium-binding domain. 15 disulfide bridges follow: Cys438–Cys451, Cys445–Cys460, Cys462–Cys474, Cys480–Cys493, Cys487–Cys502, Cys504–Cys515, Cys519–Cys529, Cys523–Cys535, Cys537–Cys546, Cys553–Cys566, Cys560–Cys575, Cys577–Cys594, Cys600–Cys613, Cys607–Cys622, and Cys624–Cys630. The Ca(2+) site is built by Asn453, Leu454, and Leu457. Residues Glu476–Lys516 form the EGF-like 2; calcium-binding domain. Asn511 carries N-linked (GlcNAc...) asparagine glycosylation. Positions Ala517–Glu547 constitute an EGF-like 3 domain. Residues Asp549 to Tyr587 enclose the EGF-like 4; calcium-binding domain. Residue Asn562 is glycosylated (N-linked (GlcNAc...) asparagine). The 36-residue stretch at Asp596–Ser631 folds into the EGF-like 5; calcium-binding domain. N-linked (GlcNAc...) asparagine glycosylation occurs at Asn609. VWFC domains follow at residues Gly632–Asp687 and Ser692–Val750. Asn708 is a glycosylation site (N-linked (GlcNAc...) asparagine).

In terms of assembly, interacts with ATRAID; the interaction promotes osteoblast cell differentiation and mineralization. Homotrimer. Binds to PKC beta-1. Interacts with ROBO3.

It localises to the cytoplasm. Its subcellular location is the nucleus envelope. The protein localises to the secreted. Plays a role in the control of cell growth and differentiation. Promotes osteoblast cell differentiation and terminal mineralization. The polypeptide is Protein kinase C-binding protein NELL1 (Nell1) (Rattus norvegicus (Rat)).